The following is a 629-amino-acid chain: Methionine--tRNA ligase (629 aa).

Residues 10 to 20 carry the 'HIGH' region motif; the sequence is YYVNSEPHIGS. Zn(2+) contacts are provided by cysteine 125, cysteine 128, cysteine 146, and cysteine 149. A 'KMSKS' region motif is present at residues 297–301; the sequence is KISKS. Lysine 300 is an ATP binding site. The tRNA-binding domain occupies 529–629; that stretch reads DFSKVDLRIA…GEITPGAKVS (101 aa).

Belongs to the class-I aminoacyl-tRNA synthetase family. MetG type 2A subfamily. Homodimer. The cofactor is Zn(2+).

The protein localises to the cytoplasm. It catalyses the reaction tRNA(Met) + L-methionine + ATP = L-methionyl-tRNA(Met) + AMP + diphosphate. In terms of biological role, is required not only for elongation of protein synthesis but also for the initiation of all mRNA translation through initiator tRNA(fMet) aminoacylation. This Thermotoga maritima (strain ATCC 43589 / DSM 3109 / JCM 10099 / NBRC 100826 / MSB8) protein is Methionine--tRNA ligase (metG).